The primary structure comprises 505 residues: Histidine ammonia-lyase (505 aa).

Positions 141 to 143 (ASG) form a cross-link, 5-imidazolinone (Ala-Gly). The residue at position 142 (S142) is a 2,3-didehydroalanine (Ser).

The protein belongs to the PAL/histidase family. Post-translationally, contains an active site 4-methylidene-imidazol-5-one (MIO), which is formed autocatalytically by cyclization and dehydration of residues Ala-Ser-Gly.

The protein resides in the cytoplasm. It catalyses the reaction L-histidine = trans-urocanate + NH4(+). Its pathway is amino-acid degradation; L-histidine degradation into L-glutamate; N-formimidoyl-L-glutamate from L-histidine: step 1/3. The polypeptide is Histidine ammonia-lyase (Bacillus cereus (strain AH187)).